A 179-amino-acid chain; its full sequence is Large ribosomal subunit protein uL5 (179 aa).

The protein belongs to the universal ribosomal protein uL5 family. In terms of assembly, part of the 50S ribosomal subunit; part of the 5S rRNA/L5/L18/L25 subcomplex. Contacts the 5S rRNA and the P site tRNA. Forms a bridge to the 30S subunit in the 70S ribosome.

This is one of the proteins that bind and probably mediate the attachment of the 5S RNA into the large ribosomal subunit, where it forms part of the central protuberance. In the 70S ribosome it contacts protein S13 of the 30S subunit (bridge B1b), connecting the 2 subunits; this bridge is implicated in subunit movement. Contacts the P site tRNA; the 5S rRNA and some of its associated proteins might help stabilize positioning of ribosome-bound tRNAs. This chain is Large ribosomal subunit protein uL5, found in Rickettsia typhi (strain ATCC VR-144 / Wilmington).